Here is a 1309-residue protein sequence, read N- to C-terminus: Target of rapamycin complex 2 subunit ste20 (1309 aa).

The 87-residue stretch at 24–110 (DFIKKMNTTD…IESFQGENGE (87 aa)) folds into the REM-1 domain. Positions 105-128 (QGENGEAKTGSTSLTRSASATVSR) are disordered. A compositionally biased stretch (polar residues) spans 113–128 (TGSTSLTRSASATVSR). At Ser-151 the chain carries Phosphoserine. A disordered region spans residues 183–205 (NVNEKNNSSSEDTQPNGKRPSSL). A compositionally biased stretch (polar residues) spans 194-205 (DTQPNGKRPSSL). Transmembrane regions (helical) follow at residues 285–305 (LFLD…WILS), 392–412 (LIDG…LVYL), 504–524 (VIDL…ESFL), 564–584 (TAVL…VCMI), 926–946 (LNHW…LEVC), and 984–1004 (LLLR…INFI). Thr-1203 carries the phosphothreonine modification.

Belongs to the RICTOR family. The target of rapamycin complex 2 (TORC2) is composed of at least bit61, pop3/wat1, sin1, ste20 and tor1. Either Ser-203 or Ser-204 are phosphorylated as well.

The protein localises to the membrane. In terms of biological role, component of TORC2, which regulates multiple cellular processes to control cell growth in response to environmental signals. TORC2 is required for cell survival under various stress conditions. TORC2 positively controls G1 cell-cycle arrest, sexual development and amino acid uptake. Positively regulates amino acid uptake through the control of expression of amino acid permeases. This is Target of rapamycin complex 2 subunit ste20 from Schizosaccharomyces pombe (strain 972 / ATCC 24843) (Fission yeast).